The chain runs to 244 residues: ATP synthase subunit 4, mitochondrial (244 aa).

The transit peptide at 1–35 (MSMSMGVRGLALRSVSKTLFSQGVRCPSMVIGARY) directs the protein to the mitochondrion. Serine 144 is modified (phosphoserine).

Belongs to the eukaryotic ATPase B chain family. In terms of assembly, F-type ATPases have 2 components, CF(1) - the catalytic core - and CF(0) - the membrane proton channel. In yeast, the dimeric form of ATP synthase consists of 17 polypeptides: alpha, beta, gamma, delta, epsilon, 4 (B), 5 (OSCP), 6 (A), 8, 9 (C), d, E (Tim11), f, g, h, i/j and k.

Its subcellular location is the mitochondrion. The protein resides in the mitochondrion inner membrane. In terms of biological role, mitochondrial membrane ATP synthase (F(1)F(0) ATP synthase or Complex V) produces ATP from ADP in the presence of a proton gradient across the membrane which is generated by electron transport complexes of the respiratory chain. F-type ATPases consist of two structural domains, F(1) - containing the extramembraneous catalytic core, and F(0) - containing the membrane proton channel, linked together by a central stalk and a peripheral stalk. During catalysis, ATP synthesis in the catalytic domain of F(1) is coupled via a rotary mechanism of the central stalk subunits to proton translocation. Part of the complex F(0) domain and the peripheric stalk, which acts as a stator to hold the catalytic alpha(3)beta(3) subcomplex and subunit a/ATP6 static relative to the rotary elements. This chain is ATP synthase subunit 4, mitochondrial (ATP4), found in Saccharomyces cerevisiae (strain ATCC 204508 / S288c) (Baker's yeast).